The chain runs to 405 residues: Tryptophan synthase beta chain (405 aa).

Residue Lys-98 is modified to N6-(pyridoxal phosphate)lysine.

The protein belongs to the TrpB family. As to quaternary structure, tetramer of two alpha and two beta chains. Pyridoxal 5'-phosphate is required as a cofactor.

It catalyses the reaction (1S,2R)-1-C-(indol-3-yl)glycerol 3-phosphate + L-serine = D-glyceraldehyde 3-phosphate + L-tryptophan + H2O. The protein operates within amino-acid biosynthesis; L-tryptophan biosynthesis; L-tryptophan from chorismate: step 5/5. Its function is as follows. The beta subunit is responsible for the synthesis of L-tryptophan from indole and L-serine. The sequence is that of Tryptophan synthase beta chain (trpB) from Xylella fastidiosa (strain 9a5c).